We begin with the raw amino-acid sequence, 3038 residues long: Lovastatin nonaketide synthase, polyketide synthase component (3038 aa).

The 440-residue stretch at 8–447 folds into the Ketosynthase family 3 (KS3) domain; the sequence is NEPIVVVGSG…GTNAHAIIEE (440 aa). Active-site for beta-ketoacyl synthase activity residues include Cys-181, His-320, and His-367. A malonyl-CoA:ACP transacylase (MAT) domain region spans residues 562-889; it reads IFTGQGAQWP…GKNDLDSFSR (328 aa). Ser-656 functions as the For malonyltransferase activity in the catalytic mechanism. The tract at residues 695 to 757 is lovC-binding; that stretch reads AMLAAGMSFE…DESTFARLLK (63 aa). Residues 953 to 1089 are N-terminal hotdog fold; that stretch reads HLLLGKLSEY…GQLALTIEDV (137 aa). Residues 953-1263 are dehydratase (DH) domain; the sequence is HLLLGKLSEY…ENITFKPFSP (311 aa). The PKS/mFAS DH domain maps to 953–1267; it reads HLLLGKLSEY…FKPFSPPDAS (315 aa). The active-site Proton acceptor; for dehydratase activity is the His-985. Residues 1107 to 1267 form a C-terminal hotdog fold region; sequence EEHPHMNRVN…FKPFSPPDAS (161 aa). Asp-1174 (proton donor; for dehydratase activity) is an active-site residue. The methyltransferase (CMet) domain stretch occupies residues 1443 to 1543; sequence LEIGAGTGGA…ARSLLKPGGQ (101 aa). Residues 2139–2437 form a ketoreductase (KR) domain region; the sequence is TLPTRVRSID…KIPEYRGAKA (299 aa). Residues 2463–2538 form the Carrier domain; the sequence is QIVIDGLSAK…DLANEAAARL (76 aa). Ser-2498 carries the post-translational modification O-(pantetheine 4'-phosphoryl)serine. Positions 2546-2602 are disordered; it reads VAATDGGAESTDNTSENEVSGREDTDLSAAATITEPSSADEDDTEPGDEDVPRSHHP. Positions 2583–2594 are enriched in acidic residues; sequence SADEDDTEPGDE. Positions 2602 to 2952 are inactive Condensation domain; the sequence is PLSLGQEYSW…PTSNQPAPLF (351 aa).

Homodimer. Each MAT domain from the lovB homodimer binds one lovC molecule to form the final active lovB-lovC megasynthase complex. The cofactor is pantetheine 4'-phosphate.

The enzyme catalyses holo-[lovastatin nonaketide synthase] + 9 malonyl-CoA + S-adenosyl-L-methionine + 11 NADPH + 19 H(+) = dihydromonacolin L-[lovastatin nonaketide synthase] + S-adenosyl-L-homocysteine + 9 CO2 + 11 NADP(+) + 9 CoA + 6 H2O. Its pathway is polyketide biosynthesis; lovastatin biosynthesis. Its function is as follows. Lovastatin nonaketide synthase; part of the gene cluster that mediates the biosynthesis of lovastatin (also known as mevinolin, mevacor or monacolin K), a hypolipidemic inhibitor of (3S)-hydroxymethylglutaryl-coenzyme A (HMG-CoA) reductase (HMGR). The first step in the biosynthesis of lovastatin is the production of dihydromonacolin L acid by the lovastatin nonaketide synthase lovB and the trans-acting enoyl reductase lovC (called the lovB-lovC megasynthase complex) via condensation of one acetyl-CoA unit and 8 malonyl-CoA units. The formation of the LovB/C complex is essential for the integrity of the catalytic chamber to the complete total synthesis of DML acid. Dihydromonacolin L acid is released from lovB by the thioesterase lovG. Next, dihydromonacolin L acid is oxidized by the dihydromonacolin L monooxygenase lovA twice to form monacolin J acid. The 2-methylbutyrate moiety of lovastatin is synthesized by the lovastatin diketide synthase lovF via condensation of one acetyl-CoA unit and one malonyl-CoA unit. Finally, the covalent attachment of this moiety to monacolin J acid is catalyzed by the transesterase lovD to yield lovastatin. LovD has broad substrate specificity and can also convert monacolin J to simvastatin using alpha-dimethylbutanoyl-S-methyl-3-mercaptopropionate (DMB-S-MMP) as the thioester acyl donor, and can also catalyze the reverse reaction and function as hydrolase in vitro. LovD has much higher activity with LovF-bound 2-methylbutanoate than with free diketide substrates. This is Lovastatin nonaketide synthase, polyketide synthase component from Aspergillus terreus.